The chain runs to 446 residues: Glutamyl-tRNA reductase (446 aa).

Residues 49-52, serine 109, 114-116, and glutamine 120 contribute to the substrate site; these read TCNR and ETQ. Cysteine 50 (nucleophile) is an active-site residue. 189-194 contacts NADP(+); that stretch reads GAGKMG.

The protein belongs to the glutamyl-tRNA reductase family. As to quaternary structure, homodimer.

It catalyses the reaction (S)-4-amino-5-oxopentanoate + tRNA(Glu) + NADP(+) = L-glutamyl-tRNA(Glu) + NADPH + H(+). Its pathway is porphyrin-containing compound metabolism; protoporphyrin-IX biosynthesis; 5-aminolevulinate from L-glutamyl-tRNA(Glu): step 1/2. Catalyzes the NADPH-dependent reduction of glutamyl-tRNA(Glu) to glutamate 1-semialdehyde (GSA). This Priestia megaterium (Bacillus megaterium) protein is Glutamyl-tRNA reductase.